Reading from the N-terminus, the 180-residue chain is MKGGKRVQTARPNRINGEIRAQEVRLTGLEGEQLGIVSLREAIEKAEEAGVDLVEISPNAEPPVCRIMDYGKFLYEKSKSSKEQKKKQKVIQVKEIKFRPGTDEGDYQVKLRSLIRFLEDGDKAKITLRFRGREMAHQQIGMEVLNRVKDDLVELAVVEAFPTKIEGRQMIMVLAPKKKQ.

It belongs to the IF-3 family. In terms of assembly, monomer.

Its subcellular location is the cytoplasm. Its function is as follows. IF-3 binds to the 30S ribosomal subunit and shifts the equilibrium between 70S ribosomes and their 50S and 30S subunits in favor of the free subunits, thus enhancing the availability of 30S subunits on which protein synthesis initiation begins. In Klebsiella pneumoniae, this protein is Translation initiation factor IF-3.